The chain runs to 78 residues: Large ribosomal subunit protein bL28 (78 aa).

The tract at residues 1–25 (MSRVCQVTGKRPAVGNNRSHAKNAT) is disordered.

It belongs to the bacterial ribosomal protein bL28 family.

This is Large ribosomal subunit protein bL28 from Aliivibrio fischeri (strain ATCC 700601 / ES114) (Vibrio fischeri).